A 400-amino-acid chain; its full sequence is MIIKPKTRGFICTTTHPVGCEANVLEQINITKAKGPVANGPKKVLVIGSSSGYGLSSRIAAAFGSGAATLGVFFEKPGTETKPGTAGWYNSAAFDKFAKQGGLYSKSLNCDAFSHEAKQKAIELIKQDLGQVDMVVYSLASPVRKLPDSGELIRSSLKPIGETYKSTAVDTNKDLIIETSVEPATEQEIEDTVTVMGGQDWELWINALAEAGVLTPDCKTVAYSYIGTELTWPIYWHGALGKAKMDLDRAAHALNDKLSATGGSANVAVLKSVVTQASSAIPVMPLYIAMVFKKMREEGLHEGCQEQINRMFHERLYRADGAAPAVDDANRLRLDDWELRDEIQQHCRDLWPTITTENLSELTDYREYKEEFLKLFGFGIESVDYDADVNPEVNFDVEQF.

NAD(+)-binding positions include 48–53, 74–75, 111–112, and 139–140; these read GSSSGY, FE, DA, and LA. Y225 contacts substrate. Y235 (proton donor) is an active-site residue. Residues K244 and 273-275 each bind NAD(+); that span reads VVT.

Belongs to the TER reductase family. Monomer.

The enzyme catalyses a 2,3-saturated acyl-[ACP] + NAD(+) = a (2E)-enoyl-[ACP] + NADH + H(+). It participates in lipid metabolism; fatty acid biosynthesis. Its function is as follows. Involved in the final reduction of the elongation cycle of fatty acid synthesis (FAS II). Catalyzes the reduction of a carbon-carbon double bond in an enoyl moiety that is covalently linked to an acyl carrier protein (ACP). In Shewanella loihica (strain ATCC BAA-1088 / PV-4), this protein is Enoyl-[acyl-carrier-protein] reductase [NADH].